The following is a 137-amino-acid chain: Competence protein ComGG (137 aa).

Residues 10–30 (GVLLYAVTIAAIFSLLLQFYL) traverse the membrane as a helical segment. The interval 106 to 137 (EKRDKKEEVATDSSEKVEKKKSEEKPEKKENS) is disordered.

As to quaternary structure, the transformation pili are flexible filaments, consisting mainly of the major pilin ComGC and smaller amounts of the minor pilins, including at least ComGD, ComGF and ComGG, and perhaps ComGE. Interacts with ComGC; the interaction is probably direct. Interacts with ComGD. Interacts with ComGE. Interacts with ComGF. May act as a link between ComGC, ComGD and ComGF.

The protein resides in the fimbrium. The protein localises to the cell membrane. Required for formation of the type IV-like pilus (T4P) that plays a role in transformation. Transformation pili are dynamically extended and retracted, perhaps thereby promoting DNA uptake and transformation. Required for transformation. This Streptococcus pneumoniae (strain ATCC BAA-255 / R6) protein is Competence protein ComGG.